The following is a 362-amino-acid chain: G-protein coupled receptor 4 (362 aa).

At 1-8 the chain is on the extracellular side; it reads MGNRTLEG. Asparagine 3 is a glycosylation site (N-linked (GlcNAc...) asparagine). A helical membrane pass occupies residues 9-45; the sequence is CHVDSRMDHLFPPSLYIFVIGVGLPTNCLALWAAYRQ. Cystine bridges form between cysteine 9–cysteine 258 and cysteine 90–cysteine 168. Residues 46–49 lie on the Cytoplasmic side of the membrane; that stretch reads VRQR. The helical transmembrane segment at 50-80 threads the bilayer; it reads NELGVYLMNLSIADLLYICTLPLWVDYFLHH. At 81-85 the chain is on the extracellular side; sequence DNWIH. The helical transmembrane segment at 86 to 121 threads the bilayer; the sequence is GPGSCKLFGFIFYTNIYISIAFLCCISVDRYLAVAH. The Cytoplasmic portion of the chain corresponds to 122–129; the sequence is PLRFARLR. A helical transmembrane segment spans residues 130-156; it reads RVKTAVAVSSVVWATELGANSAPLFHD. The Extracellular segment spans residues 157-172; the sequence is ELFRDRYNHTFCFEKF. The tract at residues 157-172 is extracellular loop 2 (ECL2); that stretch reads ELFRDRYNHTFCFEKF. Asparagine 164 is a glycosylation site (N-linked (GlcNAc...) asparagine). A helical membrane pass occupies residues 173–210; sequence PMEGWVAWMNLYRVFVGFLFPWALMLLSYRGILRAVRG. The Cytoplasmic segment spans residues 211–214; the sequence is SVST. A helical transmembrane segment spans residues 215–250; it reads ERQEKVKIKRLALSLIAIVLVCFAPYHVLLLSRSAV. Residues 251–260 are Extracellular-facing; the sequence is YLRRPRDCGF. Residues 261–289 traverse the membrane as a helical segment; the sequence is EERVFSAYHSSLAFTSLNCVADPILYCLV. Over 290 to 362 the chain is Cytoplasmic; it reads NEGARSDVAK…VQLKMLPPAQ (73 aa).

Belongs to the G-protein coupled receptor 1 family.

The protein resides in the cell membrane. Its activity is regulated as follows. Activated by a network of residues that connects an extracellular-facing cavity to Glu-145, a conserved charged residue buried in the transmembrane core of the receptor. Protonation likely drives conformational changes in extracellular loop 2 (ECL2), which stabilizes movement of transmembrane 3 (TM3) and a series of rearrangements that connect the extracellular-facing cavity to Glu-145, a residue only conserved in proton-sensing G-protein coupled receptors. Proton-sensing G-protein coupled receptor activated by extracellular pH, which is required to monitor pH changes and generate adaptive reactions. Activated by an optimal pH of 6.8-7.2. Ligand binding causes a conformation change that triggers signaling via guanine nucleotide-binding proteins (G proteins) and modulates the activity of downstream effectors, such as adenylate cyclase. GPR4 is mainly coupled to G(s) G proteins and mediates activation of adenylate cyclase activity. May also couple with G(q) and G(12)/G(13) G proteins. Acts as a key regulator of respiratory sensitivity to CO2/H(+) in brain retrotrapezoid nucleus neurons: acts by mediating detection of protons generated by the formation of carbonic acid in the blood, an important mechanism to impulse to breathe. Also acts as a regulator of acid secretion in the kidney collecting duct by maintaining acid-base homeostasis in the kidney. Acidosis-induced GPR4 activation increases paracellular gap formation and permeability of vascular endothelial cells, possibly through the G(12)/G(13)/Rho GTPase signaling pathway. This Bos taurus (Bovine) protein is G-protein coupled receptor 4 (GPR4).